The following is a 66-amino-acid chain: Xenoxin-2 (66 aa).

4 disulfide bridges follow: Cys3-Cys24, Cys17-Cys37, Cys43-Cys58, and Cys59-Cys64.

Expressed by the skin dorsal glands.

It is found in the secreted. Its function is as follows. Lacks alpha-neurotoxic activity, has apparently no antibacterial activity, nor anti-coagulant potency. This is Xenoxin-2 from Xenopus laevis (African clawed frog).